Reading from the N-terminus, the 490-residue chain is Prostaglandin E2 receptor EP4 subtype (490 aa).

Residues Met-1–Ser-19 are Extracellular-facing. N-linked (GlcNAc...) asparagine glycosylation occurs at Asn-7. The helical transmembrane segment at Pro-20 to Cys-43 threads the bilayer. Over Lys-44–Tyr-55 the chain is Cytoplasmic. The chain crosses the membrane as a helical span at residues Thr-56–Thr-79. Residues Tyr-80–Thr-96 are Extracellular-facing. A disulfide bridge links Cys-92 with Cys-170. The helical transmembrane segment at Phe-97–Val-115 threads the bilayer. Residues Glu-116–Leu-135 are Cytoplasmic-facing. A helical membrane pass occupies residues Ala-136–Ser-160. Residues Ser-161 to Tyr-184 lie on the Extracellular side of the membrane. Residues Ser-185–Leu-211 traverse the membrane as a helical segment. The Cytoplasmic portion of the chain corresponds to Arg-212–Glu-269. A helical transmembrane segment spans residues Ile-270 to Asn-297. Over Gln-298–Leu-314 the chain is Extracellular. The chain crosses the membrane as a helical span at residues Gln-315 to Leu-334. Residues Arg-335–Ile-490 lie on the Cytoplasmic side of the membrane. Residues Glu-359–His-378 are disordered. A compositionally biased stretch (polar residues) spans Gln-363–His-378. Phosphoserine is present on residues Ser-376, Ser-379, Ser-381, and Ser-384. The segment covering Ser-439 to Glu-451 has biased composition (polar residues). The tract at residues Ser-439–Thr-477 is disordered.

The protein belongs to the G-protein coupled receptor 1 family. As to quaternary structure, interacts with FEM1A. Post-translationally, phosphorylation mediates agonist-mediated desensitization by promoting cytoplasmic retention.

The protein resides in the cell membrane. Functionally, receptor for prostaglandin E2 (PGE2). The activity of this receptor is mediated by G(s) proteins that stimulate adenylate cyclase. Has a relaxing effect on smooth muscle. May play an important role in regulating renal hemodynamics, intestinal epithelial transport, adrenal aldosterone secretion, and uterine function. In Pan troglodytes (Chimpanzee), this protein is Prostaglandin E2 receptor EP4 subtype (PTGER4).